A 241-amino-acid polypeptide reads, in one-letter code: Ubiquinone biosynthesis O-methyltransferase (241 aa).

4 residues coordinate S-adenosyl-L-methionine: Arg-42, Gly-62, Asp-83, and Met-127.

Belongs to the methyltransferase superfamily. UbiG/COQ3 family.

It catalyses the reaction a 3-demethylubiquinol + S-adenosyl-L-methionine = a ubiquinol + S-adenosyl-L-homocysteine + H(+). The enzyme catalyses a 3-(all-trans-polyprenyl)benzene-1,2-diol + S-adenosyl-L-methionine = a 2-methoxy-6-(all-trans-polyprenyl)phenol + S-adenosyl-L-homocysteine + H(+). It participates in cofactor biosynthesis; ubiquinone biosynthesis. In terms of biological role, O-methyltransferase that catalyzes the 2 O-methylation steps in the ubiquinone biosynthetic pathway. This is Ubiquinone biosynthesis O-methyltransferase from Pectobacterium atrosepticum (strain SCRI 1043 / ATCC BAA-672) (Erwinia carotovora subsp. atroseptica).